The chain runs to 359 residues: Acyl-CoA desaturase (359 aa).

The Cytoplasmic portion of the chain corresponds to 1 to 72 (MPAHLLQEEI…EGPKPKLEYV (72 aa)). The helical transmembrane segment at 73 to 93 (WRNIILMGLLHLGALYGITLI) threads the bilayer. N75 serves as a coordination point for substrate. Residues 94–97 (PTCK) lie on the Lumenal side of the membrane. The helical transmembrane segment at 98–118 (IYTFLWVLFYYVISALGITAG) threads the bilayer. Residues 119 to 217 (VHRLWSHRTY…EKLVMFQRRY (99 aa)) lie on the Cytoplasmic side of the membrane. Residues H120 and H125 each coordinate Fe cation. The Histidine box-1 motif lies at 120–125 (HRLWSH). Residues N148, R155, and D156 each coordinate substrate. The Fe cation site is built by H157, H160, and H161. A Histidine box-2 motif is present at residues 157-161 (HRAHH). Substrate is bound by residues R188 and K189. Position 203 is a phosphoserine (S203). A helical membrane pass occupies residues 218 to 237 (YKPGVLLLCFILPTLVPWYL). Over 238-241 (WGES) the chain is Lumenal. A helical membrane pass occupies residues 242 to 263 (FQNSLFFATFLRYAVVLNATWL). W262 is a substrate binding site. The Cytoplasmic segment spans residues 264 to 359 (VNSAAHMYGY…RTGEESYKSG (96 aa)). Positions 269, 298, 301, and 302 each coordinate Fe cation. The short motif at 298–302 (HNYHH) is the Histidine box-3 element.

The protein belongs to the fatty acid desaturase type 1 family. It depends on Fe(2+) as a cofactor.

Its subcellular location is the endoplasmic reticulum membrane. It catalyses the reaction octadecanoyl-CoA + 2 Fe(II)-[cytochrome b5] + O2 + 2 H(+) = (9Z)-octadecenoyl-CoA + 2 Fe(III)-[cytochrome b5] + 2 H2O. In terms of biological role, stearoyl-CoA desaturase that utilizes O(2) and electrons from reduced cytochrome b5 to introduce the first double bond into saturated fatty acyl-CoA substrates. Catalyzes the insertion of a cis double bond at the delta-9 position into fatty acyl-CoA substrates including palmitoyl-CoA and stearoyl-CoA. Gives rise to a mixture of 16:1 and 18:1 unsaturated fatty acids. Plays an important role in lipid biosynthesis. Plays an important role in regulating the expression of genes that are involved in lipogenesis and in regulating mitochondrial fatty acid oxidation. Plays an important role in body energy homeostasis. Contributes to the biosynthesis of membrane phospholipids, cholesterol esters and triglycerides. The polypeptide is Acyl-CoA desaturase (SCD) (Ovis aries (Sheep)).